Here is a 686-residue protein sequence, read N- to C-terminus: DNA ligase (686 aa).

NAD(+) contacts are provided by residues Asp-45–Asp-49, Ser-94–Leu-95, and Glu-127. Lys-129 serves as the catalytic N6-AMP-lysine intermediate. Arg-150, Glu-187, Lys-302, and Lys-326 together coordinate NAD(+). Positions 420, 423, 438, and 444 each coordinate Zn(2+). Residues Leu-605 to Ser-686 form the BRCT domain.

Belongs to the NAD-dependent DNA ligase family. LigA subfamily. Mg(2+) serves as cofactor. It depends on Mn(2+) as a cofactor.

It catalyses the reaction NAD(+) + (deoxyribonucleotide)n-3'-hydroxyl + 5'-phospho-(deoxyribonucleotide)m = (deoxyribonucleotide)n+m + AMP + beta-nicotinamide D-nucleotide.. DNA ligase that catalyzes the formation of phosphodiester linkages between 5'-phosphoryl and 3'-hydroxyl groups in double-stranded DNA using NAD as a coenzyme and as the energy source for the reaction. It is essential for DNA replication and repair of damaged DNA. This Psychrobacter sp. (strain PRwf-1) protein is DNA ligase.